We begin with the raw amino-acid sequence, 178 residues long: ATP-dependent protease subunit HslV (178 aa).

Residue Thr-5 is part of the active site. Na(+)-binding residues include Ala-160, Cys-163, and Thr-166.

It belongs to the peptidase T1B family. HslV subfamily. In terms of assembly, a double ring-shaped homohexamer of HslV is capped on each side by a ring-shaped HslU homohexamer. The assembly of the HslU/HslV complex is dependent on binding of ATP.

Its subcellular location is the cytoplasm. It catalyses the reaction ATP-dependent cleavage of peptide bonds with broad specificity.. Allosterically activated by HslU binding. Its function is as follows. Protease subunit of a proteasome-like degradation complex believed to be a general protein degrading machinery. The sequence is that of ATP-dependent protease subunit HslV from Magnetococcus marinus (strain ATCC BAA-1437 / JCM 17883 / MC-1).